The primary structure comprises 83 residues: MVVIRLARGGAKKRPFYNIVAADSRNRRDGRFIERVGFYNPMAAESEKGLVVNAERLEYWKQHGAQLSPTVLRLAKQAAKAAA.

It belongs to the bacterial ribosomal protein bS16 family.

In Aromatoleum aromaticum (strain DSM 19018 / LMG 30748 / EbN1) (Azoarcus sp. (strain EbN1)), this protein is Small ribosomal subunit protein bS16.